A 67-amino-acid chain; its full sequence is Protein C' (67 aa).

The protein belongs to the rhabdoviruses C protein family.

Its function is as follows. Seems to stimulates transcription by the viral polymerase. May play a role in viral pathogenesis or transmission by insects vectors. This is Protein C' (P) from Aedes (Bovine).